A 347-amino-acid polypeptide reads, in one-letter code: Protein RecA (347 aa).

67 to 74 (GPESSGKT) serves as a coordination point for ATP.

The protein belongs to the RecA family.

It localises to the cytoplasm. Can catalyze the hydrolysis of ATP in the presence of single-stranded DNA, the ATP-dependent uptake of single-stranded DNA by duplex DNA, and the ATP-dependent hybridization of homologous single-stranded DNAs. It interacts with LexA causing its activation and leading to its autocatalytic cleavage. This chain is Protein RecA, found in Helicobacter pylori (strain P12).